Reading from the N-terminus, the 349-residue chain is Hydroxymethylglutaryl-CoA synthase (349 aa).

D29 and A30 together coordinate (3S)-3-hydroxy-3-methylglutaryl-CoA. E81 (proton donor/acceptor) is an active-site residue. C113 and T154 together coordinate (3S)-3-hydroxy-3-methylglutaryl-CoA. C113 functions as the Acyl-thioester intermediate in the catalytic mechanism. R202 contacts CoA. Residues T204 and H237 each coordinate (3S)-3-hydroxy-3-methylglutaryl-CoA. Residue H237 is the Proton donor/acceptor of the active site. K242 serves as a coordination point for CoA. 3 residues coordinate (3S)-3-hydroxy-3-methylglutaryl-CoA: K246, N269, and S299.

It belongs to the thiolase-like superfamily. Archaeal HMG-CoA synthase family. Interacts with acetoacetyl-CoA thiolase that catalyzes the precedent step in the pathway and with a DUF35 protein. The acetoacetyl-CoA thiolase/HMG-CoA synthase complex channels the intermediate via a fused CoA-binding site, which allows for efficient coupling of the endergonic thiolase reaction with the exergonic HMGCS reaction.

It catalyses the reaction acetoacetyl-CoA + acetyl-CoA + H2O = (3S)-3-hydroxy-3-methylglutaryl-CoA + CoA + H(+). It participates in metabolic intermediate biosynthesis; (R)-mevalonate biosynthesis; (R)-mevalonate from acetyl-CoA: step 2/3. Functionally, catalyzes the condensation of acetyl-CoA with acetoacetyl-CoA to form 3-hydroxy-3-methylglutaryl-CoA (HMG-CoA). Functions in the mevalonate (MVA) pathway leading to isopentenyl diphosphate (IPP), a key precursor for the biosynthesis of isoprenoid compounds that are building blocks of archaeal membrane lipids. This chain is Hydroxymethylglutaryl-CoA synthase, found in Methanosarcina mazei (strain ATCC BAA-159 / DSM 3647 / Goe1 / Go1 / JCM 11833 / OCM 88) (Methanosarcina frisia).